The primary structure comprises 299 residues: Diaminopimelate epimerase (299 aa).

3 residues coordinate substrate: Asn-15, Gln-47, and Asn-67. The active-site Proton donor is the Cys-76. Residues 77-78 (GN), Asn-163, Asn-197, and 215-216 (ER) contribute to the substrate site. The active-site Proton acceptor is the Cys-224. 225–226 (GS) is a binding site for substrate.

The protein belongs to the diaminopimelate epimerase family. In terms of assembly, homodimer.

Its subcellular location is the cytoplasm. It carries out the reaction (2S,6S)-2,6-diaminopimelate = meso-2,6-diaminopimelate. It functions in the pathway amino-acid biosynthesis; L-lysine biosynthesis via DAP pathway; DL-2,6-diaminopimelate from LL-2,6-diaminopimelate: step 1/1. Its function is as follows. Catalyzes the stereoinversion of LL-2,6-diaminopimelate (L,L-DAP) to meso-diaminopimelate (meso-DAP), a precursor of L-lysine and an essential component of the bacterial peptidoglycan. The polypeptide is Diaminopimelate epimerase (Agrobacterium fabrum (strain C58 / ATCC 33970) (Agrobacterium tumefaciens (strain C58))).